The primary structure comprises 381 residues: Ecotin-like protein 3 (381 aa).

Positions 232 to 381 (EHLEVCPKNN…GSKADPVDGK (150 aa)) are disordered. The segment covering 273 to 292 (NESSPSRPRLSSTAYWPQEN) has biased composition (polar residues). Positions 336 to 347 (RKAEDDVYEKTM) are enriched in basic and acidic residues. Over residues 363–372 (SASSTKSGNG) the composition is skewed to polar residues.

It belongs to the protease inhibitor I11 (ecotin) family.

This chain is Ecotin-like protein 3, found in Leishmania major.